Reading from the N-terminus, the 249-residue chain is Caffeoyl-CoA O-methyltransferase (249 aa).

Substrate is bound at residue lysine 21. Residues threonine 63, glutamate 85, 87–88 (GV), serine 93, aspartate 111, and alanine 140 contribute to the S-adenosyl-L-methionine site. Residue aspartate 162 coordinates substrate. Residue aspartate 162 participates in a divalent metal cation binding. Position 164 (aspartate 164) interacts with S-adenosyl-L-methionine. Residues aspartate 188 and asparagine 189 each contribute to the a divalent metal cation site. Residue asparagine 193 participates in substrate binding.

The protein belongs to the class I-like SAM-binding methyltransferase superfamily. Cation-dependent O-methyltransferase family. CCoAMT subfamily. Homodimer. A divalent metal cation serves as cofactor.

It catalyses the reaction (E)-caffeoyl-CoA + S-adenosyl-L-methionine = (E)-feruloyl-CoA + S-adenosyl-L-homocysteine + H(+). The protein operates within aromatic compound metabolism; phenylpropanoid biosynthesis. In terms of biological role, methylates caffeoyl-CoA to feruloyl-CoA and 5-hydroxyferuloyl-CoA to sinapoyl-CoA. Plays a role in the synthesis of feruloylated polysaccharides. Involved in the reinforcement of the plant cell wall. Also involved in the responding to wounding or pathogen challenge by the increased formation of cell wall-bound ferulic acid polymers. This chain is Caffeoyl-CoA O-methyltransferase, found in Eucalyptus gunnii (Cider gum).